A 1392-amino-acid polypeptide reads, in one-letter code: ATP-dependent helicase/nuclease subunit A (1392 aa).

A UvrD-like helicase ATP-binding domain is found at 3-489; sequence NPKWTPAQQA…IDLNQNFRSR (487 aa). Residue 24–31 participates in ATP binding; sequence AAAGSGKT. 3 disordered regions span residues 291–319, 555–594, and 1051–1126; these read RGSK…KARD, KRGA…LEEA, and GPVQ…LDTK. 2 stretches are compositionally biased toward basic and acidic residues: residues 305-319 and 567-583; these read ENSK…KARD and SPAK…REPE. Residues 556 to 886 form the UvrD-like helicase C-terminal domain; it reads RGAEDAATEV…RFITVHSSKG (331 aa). Over residues 584–594 the composition is skewed to acidic residues; sequence SGDDESSLEEA. The segment covering 1088 to 1113 has biased composition (basic and acidic residues); sequence ASGKTEIPGETKNSEETKTSEDKKNL.

Belongs to the helicase family. AddA subfamily. As to quaternary structure, heterodimer of AddA and AddB/RexB. Mg(2+) is required as a cofactor.

It carries out the reaction Couples ATP hydrolysis with the unwinding of duplex DNA by translocating in the 3'-5' direction.. It catalyses the reaction ATP + H2O = ADP + phosphate + H(+). The heterodimer acts as both an ATP-dependent DNA helicase and an ATP-dependent, dual-direction single-stranded exonuclease. Recognizes the chi site generating a DNA molecule suitable for the initiation of homologous recombination. The AddA nuclease domain is required for chi fragment generation; this subunit has the helicase and 3' -&gt; 5' nuclease activities. This chain is ATP-dependent helicase/nuclease subunit A, found in Desulfitobacterium hafniense (strain DSM 10664 / DCB-2).